The following is a 522-amino-acid chain: Bifunctional purine biosynthesis protein PurH (522 aa).

In terms of domain architecture, MGS-like spans 1-143; sequence MIRRALISVS…KNHARVAVVV (143 aa).

It belongs to the PurH family.

The enzyme catalyses (6R)-10-formyltetrahydrofolate + 5-amino-1-(5-phospho-beta-D-ribosyl)imidazole-4-carboxamide = 5-formamido-1-(5-phospho-D-ribosyl)imidazole-4-carboxamide + (6S)-5,6,7,8-tetrahydrofolate. The catalysed reaction is IMP + H2O = 5-formamido-1-(5-phospho-D-ribosyl)imidazole-4-carboxamide. It participates in purine metabolism; IMP biosynthesis via de novo pathway; 5-formamido-1-(5-phospho-D-ribosyl)imidazole-4-carboxamide from 5-amino-1-(5-phospho-D-ribosyl)imidazole-4-carboxamide (10-formyl THF route): step 1/1. The protein operates within purine metabolism; IMP biosynthesis via de novo pathway; IMP from 5-formamido-1-(5-phospho-D-ribosyl)imidazole-4-carboxamide: step 1/1. The protein is Bifunctional purine biosynthesis protein PurH of Sorangium cellulosum (strain So ce56) (Polyangium cellulosum (strain So ce56)).